The following is a 199-amino-acid chain: Recombination protein RecR (199 aa).

The C4-type zinc finger occupies C57–C72. Positions E81–P176 constitute a Toprim domain.

The protein belongs to the RecR family.

May play a role in DNA repair. It seems to be involved in an RecBC-independent recombinational process of DNA repair. It may act with RecF and RecO. The sequence is that of Recombination protein RecR from Shewanella sediminis (strain HAW-EB3).